The primary structure comprises 366 residues: Ribosomal RNA large subunit methyltransferase M (366 aa).

Residues S188, 221 to 224 (CPGG), D240, D260, and D277 contribute to the S-adenosyl-L-methionine site. K306 serves as the catalytic Proton acceptor.

It belongs to the class I-like SAM-binding methyltransferase superfamily. RNA methyltransferase RlmE family. RlmM subfamily. As to quaternary structure, monomer.

The protein localises to the cytoplasm. It catalyses the reaction cytidine(2498) in 23S rRNA + S-adenosyl-L-methionine = 2'-O-methylcytidine(2498) in 23S rRNA + S-adenosyl-L-homocysteine + H(+). Catalyzes the 2'-O-methylation at nucleotide C2498 in 23S rRNA. The polypeptide is Ribosomal RNA large subunit methyltransferase M (Pectobacterium carotovorum subsp. carotovorum (strain PC1)).